A 38-amino-acid polypeptide reads, in one-letter code: RapG inhibitor (38 aa).

The propeptide occupies 1–33 (MKRFLIGAGVAAVILSGWFIADHQTHSQEMKVA).

It belongs to the Phr family. Contains a predicted signal peptide cleavage site in the N-terminal region, however the propeptide is probably subject to only one processing event, at the N-terminal end of the mature peptide.

Its subcellular location is the secreted. It is found in the cytoplasm. Its function is as follows. Signaling molecule involved in the regulation of expression of DegU-controlled genes. Secreted during production, but the mature peptide acts intracellularly, indicating that it needs to be imported into the cell to function. Stimulates the DegU-dependent expression of aprE, an extracellular alkaline protease. Acts by inhibiting RapG activity. At high concentrations, represses the DegS-dependent aprE expression. The polypeptide is RapG inhibitor (phrG) (Bacillus subtilis (strain 168)).